The following is a 322-amino-acid chain: Pantothenate kinase (322 aa).

ATP is bound at residue 100–107; the sequence is GSVAVGKS.

The protein belongs to the prokaryotic pantothenate kinase family.

The protein resides in the cytoplasm. The enzyme catalyses (R)-pantothenate + ATP = (R)-4'-phosphopantothenate + ADP + H(+). Its pathway is cofactor biosynthesis; coenzyme A biosynthesis; CoA from (R)-pantothenate: step 1/5. The polypeptide is Pantothenate kinase (Agrobacterium fabrum (strain C58 / ATCC 33970) (Agrobacterium tumefaciens (strain C58))).